The following is a 141-amino-acid chain: Large ribosomal subunit protein uL11 (141 aa).

It belongs to the universal ribosomal protein uL11 family. In terms of assembly, part of the ribosomal stalk of the 50S ribosomal subunit. Interacts with L10 and the large rRNA to form the base of the stalk. L10 forms an elongated spine to which L12 dimers bind in a sequential fashion forming a multimeric L10(L12)X complex. One or more lysine residues are methylated.

Forms part of the ribosomal stalk which helps the ribosome interact with GTP-bound translation factors. The chain is Large ribosomal subunit protein uL11 from Streptococcus pneumoniae serotype 2 (strain D39 / NCTC 7466).